The primary structure comprises 284 residues: Pantothenate synthetase (284 aa).

30-37 is a binding site for ATP; that stretch reads MGNLHDGH. Catalysis depends on His37, which acts as the Proton donor. Gln61 contacts (R)-pantoate. Gln61 is a beta-alanine binding site. 149–152 contributes to the ATP binding site; sequence GEKD. Gln155 contacts (R)-pantoate. ATP is bound by residues Val178 and 186–189; that span reads LSSR.

This sequence belongs to the pantothenate synthetase family. As to quaternary structure, homodimer.

The protein resides in the cytoplasm. It catalyses the reaction (R)-pantoate + beta-alanine + ATP = (R)-pantothenate + AMP + diphosphate + H(+). It participates in cofactor biosynthesis; (R)-pantothenate biosynthesis; (R)-pantothenate from (R)-pantoate and beta-alanine: step 1/1. Functionally, catalyzes the condensation of pantoate with beta-alanine in an ATP-dependent reaction via a pantoyl-adenylate intermediate. In Klebsiella pneumoniae subsp. pneumoniae (strain ATCC 700721 / MGH 78578), this protein is Pantothenate synthetase.